We begin with the raw amino-acid sequence, 291 residues long: Exosome complex component RRP42 (291 aa).

Ala2 carries the post-translational modification N-acetylalanine. Lys116 carries the N6-acetyllysine modification. Ser177 is modified (phosphoserine).

This sequence belongs to the RNase PH family. In terms of assembly, component of the RNA exosome core complex (Exo-9), composed of EXOSC1, EXOSC2, EXOSC3, EXOSC4, EXOSC5, EXOSC6, EXOSC7, EXOSC8 and EXOSC9; within the complex interacts with EXOSC2 and EXOSC4. The catalytically inactive RNA exosome core complex (Exo-9) associates with the catalytic subunit EXOSC10/RRP6. Exo-9 may associate with DIS3 to form the nucleolar exosome complex, or DIS3L to form the cytoplasmic exosome complex. Exo-9 is formed by a hexameric base ring consisting of the heterodimers EXOSC4-EXOSC9, EXOSC5-EXOSC8 and EXOSC6-EXOSC7, and a cap ring consisting of EXOSC1, EXOSC2 and EXOSC3. The RNA exosome complex associates with cofactors C1D/RRP47, MPHOSPH6/MPP6 and MTREX/MTR4. Interacts with ZC3HAV1. Interacts with DIS3; the interaction is direct.

It is found in the nucleus. It localises to the nucleolus. Its subcellular location is the cytoplasm. Functionally, non-catalytic component of the RNA exosome complex which has 3'-&gt;5' exoribonuclease activity and participates in a multitude of cellular RNA processing and degradation events. In the nucleus, the RNA exosome complex is involved in proper maturation of stable RNA species such as rRNA, snRNA and snoRNA, in the elimination of RNA processing by-products and non-coding 'pervasive' transcripts, such as antisense RNA species and promoter-upstream transcripts (PROMPTs), and of mRNAs with processing defects, thereby limiting or excluding their export to the cytoplasm. The RNA exosome may be involved in Ig class switch recombination (CSR) and/or Ig variable region somatic hypermutation (SHM) by targeting AICDA deamination activity to transcribed dsDNA substrates. In the cytoplasm, the RNA exosome complex is involved in general mRNA turnover and specifically degrades inherently unstable mRNAs containing AU-rich elements (AREs) within their 3' untranslated regions, and in RNA surveillance pathways, preventing translation of aberrant mRNAs. It seems to be involved in degradation of histone mRNA. The catalytic inactive RNA exosome core complex of 9 subunits (Exo-9) is proposed to play a pivotal role in the binding and presentation of RNA for ribonucleolysis, and to serve as a scaffold for the association with catalytic subunits and accessory proteins or complexes. The protein is Exosome complex component RRP42 (EXOSC7) of Homo sapiens (Human).